Here is a 467-residue protein sequence, read N- to C-terminus: Putative serine/threonine-protein kinase R400 (467 aa).

Residues 99 to 467 (GVKLIYIKSG…STGQKPTKKV (369 aa)) enclose the Protein kinase domain. ATP contacts are provided by residues 105–113 (IKSGTTGHT) and lysine 129. Catalysis depends on aspartate 272, which acts as the Proton acceptor. The segment at 443-467 (LFQQGNGSKQPVPKKSTGQKPTKKV) is disordered. Residues 458-467 (STGQKPTKKV) show a composition bias toward polar residues.

This sequence belongs to the protein kinase superfamily. Ser/Thr protein kinase family.

Its subcellular location is the virion. It carries out the reaction L-seryl-[protein] + ATP = O-phospho-L-seryl-[protein] + ADP + H(+). The enzyme catalyses L-threonyl-[protein] + ATP = O-phospho-L-threonyl-[protein] + ADP + H(+). This Acanthamoeba polyphaga mimivirus (APMV) protein is Putative serine/threonine-protein kinase R400.